Reading from the N-terminus, the 420-residue chain is MVEKRVQPLARDAMAYVLAGGRGSRLKELTDRRAKPAVYFGGKARIIDFALSNALNSGIRRIGVATQYKAHSLIRHMQRGWNFFRPERNESFDILPASQRVSETQWYEGTADAVYQNIDIIEDYGVEYMVILAGDHVYKMDYEWMLQQHVDSGADVTIGCLEVPRMEAVGFGVMHVNEKDEIIAFVEKPADPPPIPDKPDFALASMGIYVFHTKFLLDALRRDAADPNSSRDFGKDIIPYIVKNGKAVAHRFAKSCVRSDFEHEPYWRDVGTIDAYWQANIDLTAIVPELDIYDKSWPIWTYAEITPPAKFVHDDEDRRGSATSSVVSGDCIISGASLNNSLLFTGVRANSFSKLEGAVILPNVKIGRRAQLKNVVIDHGVVIPEGLVVGEDPKLDAKRFRRTESGICLITQPMIDKLDI.

Residues Y107, G172, 187 to 188 (EK), and S205 contribute to the alpha-D-glucose 1-phosphate site.

It belongs to the bacterial/plant glucose-1-phosphate adenylyltransferase family. As to quaternary structure, homotetramer.

The enzyme catalyses alpha-D-glucose 1-phosphate + ATP + H(+) = ADP-alpha-D-glucose + diphosphate. It functions in the pathway glycan biosynthesis; glycogen biosynthesis. In terms of biological role, involved in the biosynthesis of ADP-glucose, a building block required for the elongation reactions to produce glycogen. Catalyzes the reaction between ATP and alpha-D-glucose 1-phosphate (G1P) to produce pyrophosphate and ADP-Glc. The chain is Glucose-1-phosphate adenylyltransferase from Rhizobium leguminosarum bv. trifolii (strain WSM2304).